A 50-amino-acid polypeptide reads, in one-letter code: Sperm protamine P1 (50 aa).

Cystine bridges form between cysteine 7/cysteine 15 and cysteine 38/cysteine 46.

The protein belongs to the protamine P1 family. In terms of assembly, cross-linked by interchain disulfide bonds around the DNA-helix. As to expression, testis.

The protein resides in the nucleus. Its subcellular location is the chromosome. Its function is as follows. Protamines substitute for histones in the chromatin of sperm during the haploid phase of spermatogenesis. They compact sperm DNA into a highly condensed, stable and inactive complex. The sequence is that of Sperm protamine P1 (PRM1) from Equus asinus (Donkey).